We begin with the raw amino-acid sequence, 110 residues long: Large ribosomal subunit protein uL24 (110 aa).

The protein belongs to the universal ribosomal protein uL24 family. Part of the 50S ribosomal subunit.

One of two assembly initiator proteins, it binds directly to the 5'-end of the 23S rRNA, where it nucleates assembly of the 50S subunit. In terms of biological role, one of the proteins that surrounds the polypeptide exit tunnel on the outside of the subunit. This Thermus thermophilus (strain ATCC BAA-163 / DSM 7039 / HB27) protein is Large ribosomal subunit protein uL24.